A 211-amino-acid chain; its full sequence is CASP-like protein 3A1 (211 aa).

Residues 1–45 (MGSIGNGRSDSVVGIQMPPAGSKMVLEPEALQVTTSPVPRWPRLG) lie on the Cytoplasmic side of the membrane. Residues 46–66 (VVMVATRAVAMVMALLSMSLM) traverse the membrane as a helical segment. Topologically, residues 67 to 95 (VSSKQRGILTIFGIEIPLDANWSFSYSLQ) are extracellular. The N-linked (GlcNAc...) asparagine glycan is linked to Asn-87. Residues 96 to 116 (FLVAMSTASAAYSLAQLLLIA) traverse the membrane as a helical segment. The Cytoplasmic portion of the chain corresponds to 117 to 131 (HKAVKKSPIVPSRRH). A helical transmembrane segment spans residues 132 to 152 (AWLLFAGDQVFSLAMMSAGSA). Topologically, residues 153–186 (AAAVANLNRTGIRHTALPNFCKPLPRFCDLSAVS) are extracellular. Asn-160 carries an N-linked (GlcNAc...) asparagine glycan. The chain crosses the membrane as a helical span at residues 187-207 (IACAFLSCVFLAASAVIDVIW). The Cytoplasmic segment spans residues 208–211 (LSSP).

The protein belongs to the Casparian strip membrane proteins (CASP) family. Homodimer and heterodimers.

The protein localises to the cell membrane. This Sorghum bicolor (Sorghum) protein is CASP-like protein 3A1.